We begin with the raw amino-acid sequence, 140 residues long: Large ribosomal subunit protein uL11 (140 aa).

It belongs to the universal ribosomal protein uL11 family. In terms of assembly, part of the ribosomal stalk of the 50S ribosomal subunit. Interacts with L10 and the large rRNA to form the base of the stalk. L10 forms an elongated spine to which L12 dimers bind in a sequential fashion forming a multimeric L10(L12)X complex. In terms of processing, one or more lysine residues are methylated.

Functionally, forms part of the ribosomal stalk which helps the ribosome interact with GTP-bound translation factors. The protein is Large ribosomal subunit protein uL11 of Staphylococcus aureus (strain bovine RF122 / ET3-1).